The sequence spans 311 residues: MTETPIRIATRQSPLALWQANYVKDALMAAHPGLQVELVTMVTRGDVILDTPLAKVGGKGLFVKELEIAMLEGRADLAVHSMKDVPVDFPDGLGLVTICEREDPRDAFVSNTYAKIEDLPSGAIVGTCSLRRQCQLKAARPDLVIKELRGNVGTRLSKLDAGEYDAIILAAAGLKRLELESRIRSFIEPEQSLPAVGQGAVGIECRVNDQRVRALLAPLNHADTADRVRCERAMNLTLQGGCQVPIGSYALLEGDTIWLRALVGEPDGSQIVRGEIRGPRTQAEQLGITLAEQLLSQGAKEILERLYCDHE.

Cys-242 is modified (S-(dipyrrolylmethanemethyl)cysteine).

It belongs to the HMBS family. As to quaternary structure, monomer. Dipyrromethane is required as a cofactor.

It catalyses the reaction 4 porphobilinogen + H2O = hydroxymethylbilane + 4 NH4(+). It functions in the pathway porphyrin-containing compound metabolism; protoporphyrin-IX biosynthesis; coproporphyrinogen-III from 5-aminolevulinate: step 2/4. Tetrapolymerization of the monopyrrole PBG into the hydroxymethylbilane pre-uroporphyrinogen in several discrete steps. This is Porphobilinogen deaminase (hemC) from Vibrio cholerae serotype O1 (strain ATCC 39315 / El Tor Inaba N16961).